A 1395-amino-acid polypeptide reads, in one-letter code: DNA-directed RNA polymerase subunit beta' (1395 aa).

The Zn(2+) site is built by Cys-70, Cys-72, Cys-85, and Cys-88. Residues Asp-460, Asp-462, and Asp-464 each contribute to the Mg(2+) site. Residues Cys-814, Cys-888, Cys-895, and Cys-898 each contribute to the Zn(2+) site.

It belongs to the RNA polymerase beta' chain family. The RNAP catalytic core consists of 2 alpha, 1 beta, 1 beta' and 1 omega subunit. When a sigma factor is associated with the core the holoenzyme is formed, which can initiate transcription. It depends on Mg(2+) as a cofactor. Requires Zn(2+) as cofactor.

It catalyses the reaction RNA(n) + a ribonucleoside 5'-triphosphate = RNA(n+1) + diphosphate. Its function is as follows. DNA-dependent RNA polymerase catalyzes the transcription of DNA into RNA using the four ribonucleoside triphosphates as substrates. The polypeptide is DNA-directed RNA polymerase subunit beta' (Pseudoalteromonas atlantica (strain T6c / ATCC BAA-1087)).